The sequence spans 301 residues: GTPase Era (301 aa).

The region spanning 4-173 (KAGFVALIGK…LECISQHLSP (170 aa)) is the Era-type G domain. Residues 12-19 (GKPNAGKS) are G1. 12–19 (GKPNAGKS) provides a ligand contact to GTP. The segment at 38 to 42 (NATRK) is G2. Residues 64–67 (DTPG) form a G3 region. GTP contacts are provided by residues 64–68 (DTPGL) and 122–125 (SKID). Positions 122-125 (SKID) are G4. A G5 region spans residues 152 to 154 (LSA). Residues 204–280 (LSDEIPYESD…FLNLQVIAQK (77 aa)) form the KH type-2 domain.

It belongs to the TRAFAC class TrmE-Era-EngA-EngB-Septin-like GTPase superfamily. Era GTPase family. In terms of assembly, monomer.

The protein resides in the cytoplasm. Its subcellular location is the cell inner membrane. In terms of biological role, an essential GTPase that binds both GDP and GTP, with rapid nucleotide exchange. Plays a role in 16S rRNA processing and 30S ribosomal subunit biogenesis and possibly also in cell cycle regulation and energy metabolism. This chain is GTPase Era, found in Helicobacter pylori (strain ATCC 700392 / 26695) (Campylobacter pylori).